The sequence spans 157 residues: Protein Smg (157 aa).

Belongs to the Smg family.

The protein is Protein Smg of Buchnera aphidicola subsp. Acyrthosiphon pisum (strain Tuc7).